The primary structure comprises 164 residues: Ribosome maturation factor RimM (164 aa).

The region spanning 90 to 161 (KGSYFIADLI…TVTIKPLEIW (72 aa)) is the PRC barrel domain.

Belongs to the RimM family. Binds ribosomal protein uS19.

It is found in the cytoplasm. Its function is as follows. An accessory protein needed during the final step in the assembly of 30S ribosomal subunit, possibly for assembly of the head region. Essential for efficient processing of 16S rRNA. May be needed both before and after RbfA during the maturation of 16S rRNA. It has affinity for free ribosomal 30S subunits but not for 70S ribosomes. This chain is Ribosome maturation factor RimM, found in Clostridium botulinum (strain ATCC 19397 / Type A).